The chain runs to 352 residues: NAD(P)H pyrophosphatase NUDT13, mitochondrial (352 aa).

The transit peptide at 1–20 directs the protein to the mitochondrion; it reads MSLYCGIACRRKFFWCYRLL. One can recognise a Nudix hydrolase domain in the interval 196-323; that stretch reads PQMAPVAITL…PYTQQQNGTF (128 aa). The Nudix box signature appears at 216 to 240; it reads RQSSFPKGMYSALAGFCDIGESVEE.

This sequence belongs to the Nudix hydrolase family. It depends on Mg(2+) as a cofactor. The cofactor is Mn(2+). As to expression, highly expressed in metastasis-suppressed chromosome 6 melanoma hybrids.

Its subcellular location is the mitochondrion. It catalyses the reaction NADH + H2O = reduced beta-nicotinamide D-ribonucleotide + AMP + 2 H(+). The enzyme catalyses NAD(+) + H2O = beta-nicotinamide D-ribonucleotide + AMP + 2 H(+). It carries out the reaction NADPH + H2O = reduced beta-nicotinamide D-ribonucleotide + adenosine 2',5'-bisphosphate + 2 H(+). NAD(P)H pyrophosphatase that hydrolyzes NADH into NMNH and AMP, and NADPH into NMNH and 2',5'-ADP. Has a marked preference for the reduced pyridine nucleotides. Does not show activity toward NAD-capped RNAs; the NAD-cap is an atypical cap present at the 5'-end of some RNAs. This chain is NAD(P)H pyrophosphatase NUDT13, mitochondrial, found in Homo sapiens (Human).